Reading from the N-terminus, the 219-residue chain is Large ribosomal subunit protein uL4 (219 aa).

The disordered stretch occupies residues 43-100 (AAKRQGTHSTKTRGEVSGGGKKPYRQKGTGRARQGSTRAPQFTGGGTVHGPQPRDYSQ).

The protein belongs to the universal ribosomal protein uL4 family. Part of the 50S ribosomal subunit.

Functionally, one of the primary rRNA binding proteins, this protein initially binds near the 5'-end of the 23S rRNA. It is important during the early stages of 50S assembly. It makes multiple contacts with different domains of the 23S rRNA in the assembled 50S subunit and ribosome. Its function is as follows. Forms part of the polypeptide exit tunnel. This Mycobacterium sp. (strain JLS) protein is Large ribosomal subunit protein uL4.